The sequence spans 80 residues: Putative DNA-directed RNA polymerase subunit omega (80 aa).

The protein belongs to the RNA polymerase subunit omega family.

Its subcellular location is the plastid. It is found in the chloroplast. It carries out the reaction RNA(n) + a ribonucleoside 5'-triphosphate = RNA(n+1) + diphosphate. May be involved in RNA polymerase activity. The chain is Putative DNA-directed RNA polymerase subunit omega from Gracilaria tenuistipitata var. liui (Red alga).